The sequence spans 37 residues: Serrulin (37 aa).

The segment at 16–37 (FGGGGIGGGGFGGGYGGGKIKG) is disordered. At K36 the chain carries Lysine amide.

As to expression, expressed in hemocytes (at protein level).

Its subcellular location is the secreted. In terms of biological role, antimicrobial protein with activity against Gram-positive and Gram-negative bacteria, filamentous fungus, and yeast. Was tested against Micrococcus luteus A270 (MIC=0.5-1 uM), Echerichia coli SBS 363 (MIC=9-16 uM), Pseudomonas aeruginosa (MIC=0.01-0.3 uM), Aspergillus niger (MIC=3-6 uM), and Candida albicans MDM8 (MIC=1.5-3 uM). Has no hemolytic activity against human erythrocytes. The protein is Serrulin of Tityus serrulatus (Brazilian scorpion).